A 344-amino-acid chain; its full sequence is Anthranilate phosphoribosyltransferase (344 aa).

Residues G81, 84–85 (GD), S89, 91–94 (NIST), 109–117 (KHGNRALSS), and A121 each bind 5-phospho-alpha-D-ribose 1-diphosphate. G81 is a binding site for anthranilate. S93 serves as a coordination point for Mg(2+). N112 serves as a coordination point for anthranilate. R167 lines the anthranilate pocket. Residues D226 and E227 each contribute to the Mg(2+) site.

It belongs to the anthranilate phosphoribosyltransferase family. In terms of assembly, homodimer. Requires Mg(2+) as cofactor.

It carries out the reaction N-(5-phospho-beta-D-ribosyl)anthranilate + diphosphate = 5-phospho-alpha-D-ribose 1-diphosphate + anthranilate. Its pathway is amino-acid biosynthesis; L-tryptophan biosynthesis; L-tryptophan from chorismate: step 2/5. In terms of biological role, catalyzes the transfer of the phosphoribosyl group of 5-phosphorylribose-1-pyrophosphate (PRPP) to anthranilate to yield N-(5'-phosphoribosyl)-anthranilate (PRA). The chain is Anthranilate phosphoribosyltransferase from Xanthobacter autotrophicus (strain ATCC BAA-1158 / Py2).